We begin with the raw amino-acid sequence, 149 residues long: Transcriptional repressor NrdR (149 aa).

A zinc finger spans residues 3–34 (CPFCSHPETQVVETRVAEDGDFVRRRRQCGAC). The ATP-cone domain maps to 49 to 139 (PNVVKKDGRR…VYRNFEDIDE (91 aa)).

This sequence belongs to the NrdR family. The cofactor is Zn(2+).

In terms of biological role, negatively regulates transcription of bacterial ribonucleotide reductase nrd genes and operons by binding to NrdR-boxes. This chain is Transcriptional repressor NrdR, found in Paracidovorax citrulli (strain AAC00-1) (Acidovorax citrulli).